Here is a 304-residue protein sequence, read N- to C-terminus: Coenzyme PQQ synthesis protein B (304 aa).

This sequence belongs to the PqqB family.

Its pathway is cofactor biosynthesis; pyrroloquinoline quinone biosynthesis. In terms of biological role, may be involved in the transport of PQQ or its precursor to the periplasm. This is Coenzyme PQQ synthesis protein B from Gluconobacter oxydans (strain 621H) (Gluconobacter suboxydans).